The sequence spans 550 residues: MKLLQRGVALALLTTFTLASETALAYEQDKTYKITVLHTNDHHGHFWRNEYGEYGLAAQKTLVDGIRKEVAAEGGSVLLLSGGDINTGVPESDLQDAEPDFRGMNLVGYDAMAIGNHEFDNPLTVLRQQEKWAKFPLLSANIYQKSTGERLFKPWALFKRQDLKIAVIGLTTDDTAKIGNPEYFTDIEFRKPADEAKLVIQELQQTEKPDIIIAATHMGHYDNGEHGSNAPGDVEMARALPAGSLAMIVGGHSQDPVCMAAENKKQVDYVPGTPCKPDQQNGIWIVQAHEWGKYVGRADFEFRNGEMKMVNYQLIPVNLKKKVTWEDGKSERVLYTPEIAENQQMISLLSPFQNKGKAQLEVKIGETNGRLEGDRDKVRFVQTNMGRLILAAQMDRTGADFAVMSGGGIRDSIEAGDISYKNVLKVQPFGNVVVYADMTGKEVIDYLTAVAQMKPDSGAYPQFANVSFVAKDGKLNDLKIKGEPVDPAKTYRMATLNFNATGGDGYPRLDNKPGYVNTGFIDAEVLKAYIQKSSPLDVSVYEPKGEVSWQ.

The N-terminal stretch at 1 to 25 (MKLLQRGVALALLTTFTLASETALA) is a signal peptide. The Zn(2+) site is built by Asp-41, His-43, Asp-84, Asn-116, His-217, His-252, and Gln-254. Cys-258 and Cys-275 are joined by a disulfide. Substrate-binding positions include 375 to 379 (RDKVR) and 498 to 504 (FNATGGD).

This sequence belongs to the 5'-nucleotidase family. Monomer. It depends on Zn(2+) as a cofactor.

Its subcellular location is the periplasm. It carries out the reaction UDP-sugar + H2O = UMP + alpha-D-aldose 1-phosphate.. The enzyme catalyses a ribonucleoside 5'-phosphate + H2O = a ribonucleoside + phosphate. With respect to regulation, the activity of this protein is inhibited by an intracellular protein inhibitor. In terms of biological role, degradation of external UDP-glucose to uridine monophosphate and glucose-1-phosphate, which can then be used by the cell. This chain is Protein UshA (ushA), found in Escherichia coli (strain K12).